A 310-amino-acid chain; its full sequence is tRNA-cytidine(32) 2-sulfurtransferase (310 aa).

The PP-loop motif signature appears at 47-52 (SGGKDS). 3 residues coordinate [4Fe-4S] cluster: Cys122, Cys125, and Cys213.

This sequence belongs to the TtcA family. As to quaternary structure, homodimer. It depends on Mg(2+) as a cofactor. [4Fe-4S] cluster serves as cofactor.

It localises to the cytoplasm. It carries out the reaction cytidine(32) in tRNA + S-sulfanyl-L-cysteinyl-[cysteine desulfurase] + AH2 + ATP = 2-thiocytidine(32) in tRNA + L-cysteinyl-[cysteine desulfurase] + A + AMP + diphosphate + H(+). It participates in tRNA modification. Catalyzes the ATP-dependent 2-thiolation of cytidine in position 32 of tRNA, to form 2-thiocytidine (s(2)C32). The sulfur atoms are provided by the cysteine/cysteine desulfurase (IscS) system. The protein is tRNA-cytidine(32) 2-sulfurtransferase of Haemophilus influenzae (strain PittEE).